Reading from the N-terminus, the 339-residue chain is Ketol-acid reductoisomerase (NADP(+)) (339 aa).

The KARI N-terminal Rossmann domain maps to 1–182 (MRVYYDRDAD…GGGRAGIIET (182 aa)). NADP(+)-binding positions include 24-27 (YGSQ), Arg48, Ser51, Thr53, and 83-86 (DELQ). His108 is a catalytic residue. Gly134 is an NADP(+) binding site. Residues 183–328 (TFKEECETDL…AELRAMMPWI (146 aa)) form the KARI C-terminal knotted domain. Asp191, Glu195, Glu227, and Glu231 together coordinate Mg(2+). Ser252 serves as a coordination point for substrate.

Belongs to the ketol-acid reductoisomerase family. Mg(2+) is required as a cofactor.

It carries out the reaction (2R)-2,3-dihydroxy-3-methylbutanoate + NADP(+) = (2S)-2-acetolactate + NADPH + H(+). The catalysed reaction is (2R,3R)-2,3-dihydroxy-3-methylpentanoate + NADP(+) = (S)-2-ethyl-2-hydroxy-3-oxobutanoate + NADPH + H(+). The protein operates within amino-acid biosynthesis; L-isoleucine biosynthesis; L-isoleucine from 2-oxobutanoate: step 2/4. It functions in the pathway amino-acid biosynthesis; L-valine biosynthesis; L-valine from pyruvate: step 2/4. Its function is as follows. Involved in the biosynthesis of branched-chain amino acids (BCAA). Catalyzes an alkyl-migration followed by a ketol-acid reduction of (S)-2-acetolactate (S2AL) to yield (R)-2,3-dihydroxy-isovalerate. In the isomerase reaction, S2AL is rearranged via a Mg-dependent methyl migration to produce 3-hydroxy-3-methyl-2-ketobutyrate (HMKB). In the reductase reaction, this 2-ketoacid undergoes a metal-dependent reduction by NADPH to yield (R)-2,3-dihydroxy-isovalerate. In Beijerinckia indica subsp. indica (strain ATCC 9039 / DSM 1715 / NCIMB 8712), this protein is Ketol-acid reductoisomerase (NADP(+)).